The following is a 393-amino-acid chain: Lipid-A-disaccharide synthase (393 aa).

The protein belongs to the LpxB family.

The catalysed reaction is a lipid X + a UDP-2-N,3-O-bis[(3R)-3-hydroxyacyl]-alpha-D-glucosamine = a lipid A disaccharide + UDP + H(+). The protein operates within bacterial outer membrane biogenesis; LPS lipid A biosynthesis. Its function is as follows. Condensation of UDP-2,3-diacylglucosamine and 2,3-diacylglucosamine-1-phosphate to form lipid A disaccharide, a precursor of lipid A, a phosphorylated glycolipid that anchors the lipopolysaccharide to the outer membrane of the cell. This is Lipid-A-disaccharide synthase from Granulibacter bethesdensis (strain ATCC BAA-1260 / CGDNIH1).